A 232-amino-acid chain; its full sequence is tRNA (guanine-N(1)-)-methyltransferase (232 aa).

Residues Gly111 and 131 to 136 each bind S-adenosyl-L-methionine; that span reads IGDYIL.

Belongs to the RNA methyltransferase TrmD family. In terms of assembly, homodimer.

Its subcellular location is the cytoplasm. It carries out the reaction guanosine(37) in tRNA + S-adenosyl-L-methionine = N(1)-methylguanosine(37) in tRNA + S-adenosyl-L-homocysteine + H(+). Functionally, specifically methylates guanosine-37 in various tRNAs. The chain is tRNA (guanine-N(1)-)-methyltransferase from Bartonella henselae (strain ATCC 49882 / DSM 28221 / CCUG 30454 / Houston 1) (Rochalimaea henselae).